Consider the following 293-residue polypeptide: Elongation factor Ts (293 aa).

The tract at residues 80 to 83 (TDFV) is involved in Mg(2+) ion dislocation from EF-Tu.

It belongs to the EF-Ts family.

It localises to the cytoplasm. Its function is as follows. Associates with the EF-Tu.GDP complex and induces the exchange of GDP to GTP. It remains bound to the aminoacyl-tRNA.EF-Tu.GTP complex up to the GTP hydrolysis stage on the ribosome. The sequence is that of Elongation factor Ts from Burkholderia vietnamiensis (strain G4 / LMG 22486) (Burkholderia cepacia (strain R1808)).